Consider the following 216-residue polypeptide: uncharacterized protein (216 aa).

A helical transmembrane segment spans residues 39 to 59; the sequence is VLPLTFIGSLLILILTIVYYF. The stretch at 59–108 forms a coiled coil; it reads FTLSGSVNELKNEISKEKSKKERLLSEIKRLEELKKTLETKKAIYEVVKI.

The protein localises to the membrane. This is an uncharacterized protein from Aquifex aeolicus (strain VF5).